The chain runs to 253 residues: Uridine phosphorylase (253 aa).

Belongs to the PNP/UDP phosphorylase family. As to quaternary structure, homohexamer.

The protein resides in the cytoplasm. It carries out the reaction uridine + phosphate = alpha-D-ribose 1-phosphate + uracil. Its pathway is pyrimidine metabolism; UMP biosynthesis via salvage pathway; uracil from uridine (phosphorylase route): step 1/1. In terms of biological role, catalyzes the reversible phosphorylytic cleavage of uridine to uracil and ribose-1-phosphate. Shows weak activity towards deoxyuridine and thymidine. The produced molecules are then utilized as carbon and energy sources or in the rescue of pyrimidine bases for nucleotide synthesis. This chain is Uridine phosphorylase, found in Escherichia coli (strain K12).